A 578-amino-acid polypeptide reads, in one-letter code: ATP-dependent RNA helicase has1 (578 aa).

Basic residues predominate over residues 1 to 12; it reads MAKSELKRKKHQ. Residues 1 to 81 form a disordered region; the sequence is MAKSELKRKK…ERVQKSVNLN (81 aa). Composition is skewed to acidic residues over residues 36–53 and 60–71; these read LPQD…EDAD and SESEELDNENED. 2 positions are modified to phosphoserine: Ser60 and Ser62. Positions 89 to 117 match the Q motif motif; that stretch reads EKFSDLQLSENIQKAIKEMGFETMTEIQK. The Helicase ATP-binding domain maps to 120 to 296; sequence IPPLLAGRDV…RISLKPGPLY (177 aa). 133–140 provides a ligand contact to ATP; sequence AKTGSGKT. Positions 243–246 match the DEAD box motif; sequence DEAD. Residues 310-480 form the Helicase C-terminal domain; that stretch reads GLEQGYVVVD…NVQSQLEKLV (171 aa). Positions 322 to 338 match the Bipartite nuclear localization signal motif; that stretch reads KRFLLLFSFLKRNLKKK. The span at 543-561 shows a compositional bias: basic and acidic residues; the sequence is DKKERRAGYNKKNHVDVYS. The disordered stretch occupies residues 543–578; sequence DKKERRAGYNKKNHVDVYSKQRSSAISQDKERGWSR.

This sequence belongs to the DEAD box helicase family. DDX18/HAS1 subfamily. Associates in the nucleolus with the 60S and pre-60S ribosomal subunits.

The protein resides in the nucleus. It localises to the nucleolus. The catalysed reaction is ATP + H2O = ADP + phosphate + H(+). In terms of biological role, ATP-dependent RNA helicase involved in 40S ribosomal subunit biogenesis. Required for the processing and cleavage of 35S pre-rRNA at sites A0, A1, and A2, leading to mature 18S rRNA. The chain is ATP-dependent RNA helicase has1 (has1) from Schizosaccharomyces pombe (strain 972 / ATCC 24843) (Fission yeast).